The chain runs to 220 residues: Vesicle-associated membrane protein 7 (220 aa).

N-acetylalanine is present on A2. Residues 2–188 (AILFAVVARG…ARAMCVKNVK (187 aa)) lie on the Cytoplasmic side of the membrane. The 104-residue stretch at 7 to 110 (VVARGTTILA…AMNSEFSSVL (104 aa)) folds into the Longin domain. The 61-residue stretch at 125–185 (RVTETQAQVD…RNLARAMCVK (61 aa)) folds into the v-SNARE coiled-coil homology domain. 2 positions are modified to phosphoserine: S167 and S168. A helical; Anchor for type IV membrane protein transmembrane segment spans residues 189 to 209 (LTAIIVVVSIVFIYIIVSPLC). Residues 210 to 220 (GGFTWPSCVKK) are Vesicular-facing.

This sequence belongs to the synaptobrevin family. May interact with STX17. Component of the SNARE complex composed of STX4, SNAP23 and VAMP7 that binds SYT7 during lysosomal exocytosis. Component of the SNARE complex composed of STX7, STX8, VAMP7 and VTI1B that is required for heterotypic fusion of late endosomes with lysosomes. Interacts with PICALM. Interacts with RAB21. In terms of tissue distribution, expressed in brain, kidney, liver, lung, spleen and thymus. Not expressed in heart and skeletal muscle.

It is found in the cytoplasmic vesicle. The protein localises to the secretory vesicle membrane. Its subcellular location is the golgi apparatus. It localises to the trans-Golgi network membrane. The protein resides in the late endosome membrane. It is found in the lysosome membrane. The protein localises to the endoplasmic reticulum membrane. Its subcellular location is the phagosome membrane. It localises to the synapse. The protein resides in the synaptosome. Involved in the targeting and/or fusion of transport vesicles to their target membrane during transport of proteins from the early endosome to the lysosome. Required for heterotypic fusion of late endosomes with lysosomes and homotypic lysosomal fusion. Required for calcium regulated lysosomal exocytosis. Involved in the export of chylomicrons from the endoplasmic reticulum to the cis Golgi. Required for exocytosis of mediators during eosinophil and neutrophil degranulation, and target cell killing by natural killer cells. Required for focal exocytosis of late endocytic vesicles during phagosome formation. The polypeptide is Vesicle-associated membrane protein 7 (Vamp7) (Rattus norvegicus (Rat)).